The sequence spans 75 residues: Tautomerase PptA (75 aa).

The Proton acceptor; via imino nitrogen role is filled by Pro2.

It belongs to the 4-oxalocrotonate tautomerase family. PptA subfamily. Homodimer.

The protein localises to the cytoplasm. This Escherichia coli O127:H6 (strain E2348/69 / EPEC) protein is Tautomerase PptA.